The following is a 364-amino-acid chain: tRNA/tmRNA (uracil-C(5))-methyltransferase (364 aa).

5 residues coordinate S-adenosyl-L-methionine: Q188, Y216, N221, E237, and D297. Catalysis depends on C322, which acts as the Nucleophile. E356 acts as the Proton acceptor in catalysis.

Belongs to the class I-like SAM-binding methyltransferase superfamily. RNA M5U methyltransferase family. TrmA subfamily.

The enzyme catalyses uridine(54) in tRNA + S-adenosyl-L-methionine = 5-methyluridine(54) in tRNA + S-adenosyl-L-homocysteine + H(+). The catalysed reaction is uridine(341) in tmRNA + S-adenosyl-L-methionine = 5-methyluridine(341) in tmRNA + S-adenosyl-L-homocysteine + H(+). In terms of biological role, dual-specificity methyltransferase that catalyzes the formation of 5-methyluridine at position 54 (m5U54) in all tRNAs, and that of position 341 (m5U341) in tmRNA (transfer-mRNA). The protein is tRNA/tmRNA (uracil-C(5))-methyltransferase of Mannheimia succiniciproducens (strain KCTC 0769BP / MBEL55E).